The primary structure comprises 369 residues: Carbamoyl phosphate synthase small chain (369 aa).

Positions 1–168 are CPSase; it reads MYGILVLEDG…KKVVKYPAKD (168 aa). L-glutamine contacts are provided by Ser45, Gly220, and Gly222. Residues 172–364 enclose the Glutamine amidotransferase type-1 domain; it reads SCVVIDCGVK…VALGMKFKQE (193 aa). Cys247 acts as the Nucleophile in catalysis. The L-glutamine site is built by Leu248, Gln251, Asn289, Gly291, and Phe292. Residues His337 and Glu339 contribute to the active site.

Belongs to the CarA family. Composed of two chains; the small (or glutamine) chain promotes the hydrolysis of glutamine to ammonia, which is used by the large (or ammonia) chain to synthesize carbamoyl phosphate. Tetramer of heterodimers (alpha,beta)4.

The catalysed reaction is hydrogencarbonate + L-glutamine + 2 ATP + H2O = carbamoyl phosphate + L-glutamate + 2 ADP + phosphate + 2 H(+). It catalyses the reaction L-glutamine + H2O = L-glutamate + NH4(+). Its pathway is amino-acid biosynthesis; L-arginine biosynthesis; carbamoyl phosphate from bicarbonate: step 1/1. It functions in the pathway pyrimidine metabolism; UMP biosynthesis via de novo pathway; (S)-dihydroorotate from bicarbonate: step 1/3. Functionally, small subunit of the glutamine-dependent carbamoyl phosphate synthetase (CPSase). CPSase catalyzes the formation of carbamoyl phosphate from the ammonia moiety of glutamine, carbonate, and phosphate donated by ATP, constituting the first step of 2 biosynthetic pathways, one leading to arginine and/or urea and the other to pyrimidine nucleotides. The small subunit (glutamine amidotransferase) binds and cleaves glutamine to supply the large subunit with the substrate ammonia. The chain is Carbamoyl phosphate synthase small chain from Methanococcus vannielii (strain ATCC 35089 / DSM 1224 / JCM 13029 / OCM 148 / SB).